Here is a 548-residue protein sequence, read N- to C-terminus: (2S)-methylsuccinyl-CoA dehydrogenase (548 aa).

FAD is bound by residues 282 to 291 (AVFTEPNTGS) and 315 to 317 (WIT). Serine 291 is a substrate binding site. 409-412 (ESAR) provides a ligand contact to substrate. FAD-binding positions include arginine 437 and 505–509 (QIHGG). Glutamate 532 acts as the Proton acceptor in catalysis. 534-536 (AAE) contributes to the FAD binding site.

It belongs to the acyl-CoA dehydrogenase family. As to quaternary structure, homodimer. It depends on FAD as a cofactor.

The catalysed reaction is (2S)-methylsuccinyl-CoA + oxidized [electron-transfer flavoprotein] + H(+) = 2-methylfumaryl-CoA + reduced [electron-transfer flavoprotein]. In terms of biological role, involved in the ethylmalonyl-CoA pathway, a new acetyl-CoA assimilation strategy that operates in a number of bacteria and replaces the glyoxylate cycle. Catalyzes the oxidation of (2S)-methylsuccinyl-CoA to yield mesaconyl-(C1)-CoA. Highly specific for (S)-methylsuccinyl-CoA. The chain is (2S)-methylsuccinyl-CoA dehydrogenase from Cereibacter sphaeroides (Rhodobacter sphaeroides).